Here is a 266-residue protein sequence, read N- to C-terminus: tRNA dimethylallyltransferase (266 aa).

This sequence belongs to the IPP transferase family. As to quaternary structure, monomer. Requires Mg(2+) as cofactor.

The enzyme catalyses adenosine(37) in tRNA + dimethylallyl diphosphate = N(6)-dimethylallyladenosine(37) in tRNA + diphosphate. Catalyzes the transfer of a dimethylallyl group onto the adenine at position 37 in tRNAs that read codons beginning with uridine, leading to the formation of N6-(dimethylallyl)adenosine (i(6)A). The chain is tRNA dimethylallyltransferase (miaA) from Helicobacter acinonychis (strain Sheeba).